Reading from the N-terminus, the 232-residue chain is Large ribosomal subunit protein uL1 (232 aa).

Belongs to the universal ribosomal protein uL1 family. In terms of assembly, part of the 50S ribosomal subunit.

Functionally, binds directly to 23S rRNA. The L1 stalk is quite mobile in the ribosome, and is involved in E site tRNA release. Its function is as follows. Protein L1 is also a translational repressor protein, it controls the translation of the L11 operon by binding to its mRNA. The polypeptide is Large ribosomal subunit protein uL1 (Bordetella petrii (strain ATCC BAA-461 / DSM 12804 / CCUG 43448)).